Consider the following 188-residue polypeptide: UPF0301 protein ABO_0112 (188 aa).

Belongs to the UPF0301 (AlgH) family.

The protein is UPF0301 protein ABO_0112 of Alcanivorax borkumensis (strain ATCC 700651 / DSM 11573 / NCIMB 13689 / SK2).